The following is a 1772-amino-acid chain: Merozoite surface protein 1 (1772 aa).

A signal peptide spans 1-18; the sequence is MKVIGLLFSFVFFAIKCK. Asn-54 carries N-linked (GlcNAc...) asparagine glycosylation. A disordered region spans residues 290–319; that stretch reads TGGQSSTEPGSGGSSASGTSSSGQASAGTG. Residues 305 to 319 are compositionally biased toward low complexity; sequence ASGTSSSGQASAGTG. N-linked (GlcNAc...) asparagine glycans are attached at residues Asn-406 and Asn-646. Residues 703 to 796 are disordered; it reads KERMEQGPAI…QPSQAASSTT (94 aa). Positions 724 to 796 are enriched in low complexity; it reads SAESSTDRST…QPSQAASSTT (73 aa). An N-linked (GlcNAc...) asparagine glycan is attached at Asn-829. The disordered stretch occupies residues 924-1070; that stretch reads AAPTPVTPAA…SRAESEEDMP (147 aa). Low complexity-rich tracts occupy residues 930–946 and 956–1052; these read TPAATEQQQQQATPDVQ and SQQP…NSQS. Asn-1018 and Asn-1090 each carry an N-linked (GlcNAc...) asparagine glycan. Residues 1362–1383 form a disordered region; sequence GAVPGSGTDTRVAGSSVDDNED. N-linked (GlcNAc...) asparagine glycosylation is found at Asn-1408, Asn-1446, Asn-1541, and Asn-1629. 2 consecutive EGF-like domains span residues 1661–1703 and 1704–1752; these read HVCV…VENN and NPTC…FCSS. The cysteines at positions 1663 and 1675 are disulfide-linked. Asn-1680 carries an N-linked (GlcNAc...) asparagine glycan. 4 cysteine pairs are disulfide-bonded: Cys-1687–Cys-1699, Cys-1707–Cys-1720, Cys-1714–Cys-1734, and Cys-1736–Cys-1750. Residue Ser-1751 is the site of GPI-anchor amidated serine attachment. Residues 1752-1772 constitute a propeptide, removed in mature form; it reads SSSFMGLSILLIITLIVFNIF.

In terms of assembly, forms a complex composed of subunits p83, p30, p38, and p42 which remain non-covalently associated; the complex is formed at the merozoite surface prior to egress from host erythrocytes. The p230 precursor is cleaved by SUB1 prior to merozoite egress into 4 subunits p83, p30, p38, and p42 which remain non-covalently associated. In a second processing step during erythrocyte invasion, p42 is cleaved by SUB2 into p33 and p19; the latter remains attached to the merozoite surface via its GPI-anchor and stays on the surface during the subsequent ring stage.

The protein localises to the cell membrane. It is found in the secreted. During the asexual blood stage, involved in merozoite egress from host erythrocytes possibly via its interaction with the host cytoskeleton protein spectrin resulting in the destabilization of the host cytoskeleton and thus leading to erythrocyte cell membrane rupture. Involved in the binding to host erythrocytes and is required for host erythrocyte invasion. This Plasmodium yoelii yoelii protein is Merozoite surface protein 1.